Here is a 25-residue protein sequence, read N- to C-terminus: Fructokinase-1 (25 aa).

This sequence belongs to the ROK (NagC/XylR) family. As to quaternary structure, homodimer. It depends on Mg(2+) as a cofactor.

It catalyses the reaction D-fructose + ATP = D-fructose 6-phosphate + ADP + H(+). With respect to regulation, inhibition by zinc ions (Potential). Inactivated by EDTA. In Lactococcus lactis subsp. lactis (Streptococcus lactis), this protein is Fructokinase-1.